The chain runs to 83 residues: NAD(P)H-quinone oxidoreductase subunit L (83 aa).

2 consecutive transmembrane segments (helical) span residues 18–38 and 53–73; these read IGGY…LLFF and FSVY…APFL.

It belongs to the complex I NdhL subunit family. NDH-1 can be composed of about 15 different subunits; different subcomplexes with different compositions have been identified which probably have different functions.

Its subcellular location is the cellular thylakoid membrane. It carries out the reaction a plastoquinone + NADH + (n+1) H(+)(in) = a plastoquinol + NAD(+) + n H(+)(out). The catalysed reaction is a plastoquinone + NADPH + (n+1) H(+)(in) = a plastoquinol + NADP(+) + n H(+)(out). Its function is as follows. NDH-1 shuttles electrons from an unknown electron donor, via FMN and iron-sulfur (Fe-S) centers, to quinones in the respiratory and/or the photosynthetic chain. The immediate electron acceptor for the enzyme in this species is believed to be plastoquinone. Couples the redox reaction to proton translocation, and thus conserves the redox energy in a proton gradient. Cyanobacterial NDH-1 also plays a role in inorganic carbon-concentration. The sequence is that of NAD(P)H-quinone oxidoreductase subunit L from Synechococcus sp. (strain CC9311).